A 446-amino-acid polypeptide reads, in one-letter code: Chromosomal replication initiator protein DnaA (446 aa).

The interval 1–92 (MENISDLWNS…SQAEEEIDLP (92 aa)) is domain I, interacts with DnaA modulators. Residues 87–107 (EEIDLPPSKPNSAQDDSNHLP) are disordered. Positions 93–109 (PSKPNSAQDDSNHLPQS) are domain II. Residues 96-107 (PNSAQDDSNHLP) are compositionally biased toward polar residues. The segment at 110-326 (MLNPKYTFDT…GALIRVVAYS (217 aa)) is domain III, AAA+ region. ATP contacts are provided by G154, G156, K157, and T158. Positions 327–446 (SLINKDINAD…QVEEINDILK (120 aa)) are domain IV, binds dsDNA.

It belongs to the DnaA family. In terms of assembly, oligomerizes as a right-handed, spiral filament on DNA at oriC.

The protein resides in the cytoplasm. Plays an essential role in the initiation and regulation of chromosomal replication. ATP-DnaA binds to the origin of replication (oriC) to initiate formation of the DNA replication initiation complex once per cell cycle. Binds the DnaA box (a 9 base pair repeat at the origin) and separates the double-stranded (ds)DNA. Forms a right-handed helical filament on oriC DNA; dsDNA binds to the exterior of the filament while single-stranded (ss)DNA is stabiized in the filament's interior. The ATP-DnaA-oriC complex binds and stabilizes one strand of the AT-rich DNA unwinding element (DUE), permitting loading of DNA polymerase. After initiation quickly degrades to an ADP-DnaA complex that is not apt for DNA replication. Binds acidic phospholipids. The polypeptide is Chromosomal replication initiator protein DnaA (Bacillus cereus (strain ATCC 10987 / NRS 248)).